The sequence spans 1033 residues: Isoleucine--tRNA ligase 2 (1033 aa).

Residues 47 to 57 (PTANGLPHVGH) carry the 'HIGH' region motif. The 'KMSKS' region signature appears at 590-594 (KMSKS). K593 lines the ATP pocket.

It belongs to the class-I aminoacyl-tRNA synthetase family. IleS type 2 subfamily. In terms of assembly, monomer. Requires Zn(2+) as cofactor.

Its subcellular location is the cytoplasm. It carries out the reaction tRNA(Ile) + L-isoleucine + ATP = L-isoleucyl-tRNA(Ile) + AMP + diphosphate. Functionally, catalyzes the attachment of isoleucine to tRNA(Ile). As IleRS can inadvertently accommodate and process structurally similar amino acids such as valine, to avoid such errors it has two additional distinct tRNA(Ile)-dependent editing activities. One activity is designated as 'pretransfer' editing and involves the hydrolysis of activated Val-AMP. The other activity is designated 'posttransfer' editing and involves deacylation of mischarged Val-tRNA(Ile). The sequence is that of Isoleucine--tRNA ligase 2 from Bacillus cereus (strain ATCC 14579 / DSM 31 / CCUG 7414 / JCM 2152 / NBRC 15305 / NCIMB 9373 / NCTC 2599 / NRRL B-3711).